The primary structure comprises 382 residues: Anhydro-N-acetylmuramic acid kinase (382 aa).

9 to 16 (GTSLDGID) is an ATP binding site.

It belongs to the anhydro-N-acetylmuramic acid kinase family.

It carries out the reaction 1,6-anhydro-N-acetyl-beta-muramate + ATP + H2O = N-acetyl-D-muramate 6-phosphate + ADP + H(+). It functions in the pathway amino-sugar metabolism; 1,6-anhydro-N-acetylmuramate degradation. It participates in cell wall biogenesis; peptidoglycan recycling. Its function is as follows. Catalyzes the specific phosphorylation of 1,6-anhydro-N-acetylmuramic acid (anhMurNAc) with the simultaneous cleavage of the 1,6-anhydro ring, generating MurNAc-6-P. Is required for the utilization of anhMurNAc either imported from the medium or derived from its own cell wall murein, and thus plays a role in cell wall recycling. In Bacillus cereus (strain Q1), this protein is Anhydro-N-acetylmuramic acid kinase.